A 522-amino-acid chain; its full sequence is Subtilisin-like protease 10 (522 aa).

A signal peptide spans 1 to 19 (MFFFKGVVAVLSFFSAVNA). The propeptide occupies 20–117 (APFMKPNNGT…VERDQIGTSQ (98 aa)). Residues 36 to 113 (SYIVLLKRDI…HVAHVERDQI (78 aa)) enclose the Inhibitor I9 domain. Positions 127 to 405 (NWGLGRLSNN…KLLVNGANGT (279 aa)) constitute a Peptidase S8 domain. Residues Asp159 and His190 each act as charge relay system in the active site. The N-linked (GlcNAc...) asparagine glycan is linked to Asn251. The active-site Charge relay system is Ser348. A compositionally biased stretch (polar residues) spans 384–397 (ASVKNPGPNTTNKL). The segment at 384–515 (ASVKNPGPNT…GWNRPMWWNR (132 aa)) is disordered. 2 N-linked (GlcNAc...) asparagine glycosylation sites follow: Asn392 and Asn403. The span at 432–459 (SQNPPPGQNPPPGQNPPPEQPAPSPPAN) shows a compositional bias: pro residues.

It belongs to the peptidase S8 family.

The protein localises to the secreted. Its function is as follows. Secreted subtilisin-like serine protease with keratinolytic activity that contributes to pathogenicity. This chain is Subtilisin-like protease 10 (SUB10), found in Arthroderma benhamiae (strain ATCC MYA-4681 / CBS 112371) (Trichophyton mentagrophytes).